A 126-amino-acid chain; its full sequence is Aspartate 1-decarboxylase (126 aa).

Catalysis depends on Ser-25, which acts as the Schiff-base intermediate with substrate; via pyruvic acid. Residue Ser-25 is modified to Pyruvic acid (Ser). Residue Thr-57 coordinates substrate. Residue Tyr-58 is the Proton donor of the active site. Residue 73–75 participates in substrate binding; it reads GAA.

The protein belongs to the PanD family. In terms of assembly, heterooctamer of four alpha and four beta subunits. Requires pyruvate as cofactor. Is synthesized initially as an inactive proenzyme, which is activated by self-cleavage at a specific serine bond to produce a beta-subunit with a hydroxyl group at its C-terminus and an alpha-subunit with a pyruvoyl group at its N-terminus.

It is found in the cytoplasm. It carries out the reaction L-aspartate + H(+) = beta-alanine + CO2. It functions in the pathway cofactor biosynthesis; (R)-pantothenate biosynthesis; beta-alanine from L-aspartate: step 1/1. Its function is as follows. Catalyzes the pyruvoyl-dependent decarboxylation of aspartate to produce beta-alanine. The sequence is that of Aspartate 1-decarboxylase from Psychromonas ingrahamii (strain DSM 17664 / CCUG 51855 / 37).